Reading from the N-terminus, the 466-residue chain is Asparagine--tRNA ligase (466 aa).

This sequence belongs to the class-II aminoacyl-tRNA synthetase family. Homodimer.

Its subcellular location is the cytoplasm. It catalyses the reaction tRNA(Asn) + L-asparagine + ATP = L-asparaginyl-tRNA(Asn) + AMP + diphosphate + H(+). In Salmonella choleraesuis (strain SC-B67), this protein is Asparagine--tRNA ligase.